A 370-amino-acid polypeptide reads, in one-letter code: Neutral protease 2 homolog AFUA_4G13750 (370 aa).

Positions 1 to 19 are cleaved as a signal peptide; the sequence is MKVTILASAILALINGALA. Positions 20–172 are excised as a propeptide; it reads LPANTPTLDV…PQAIKLLDRR (153 aa). 2 disulfide bridges follow: Cys-178–Cys-250 and Cys-257–Cys-275. Residue His-300 participates in Zn(2+) binding. Glu-301 is a catalytic residue. Zn(2+)-binding residues include His-304 and Asp-315.

Belongs to the peptidase M35 family. Zn(2+) serves as cofactor.

It is found in the secreted. The catalysed reaction is Preferential cleavage of bonds with hydrophobic residues in P1'. Also 3-Asn-|-Gln-4 and 8-Gly-|-Ser-9 bonds in insulin B chain.. In terms of biological role, secreted metalloproteinase that allows assimilation of proteinaceous substrates. Shows high activities on basic nuclear substrates such as histone and protamine. May be involved in virulence. The polypeptide is Neutral protease 2 homolog AFUA_4G13750 (Aspergillus fumigatus (strain ATCC MYA-4609 / CBS 101355 / FGSC A1100 / Af293) (Neosartorya fumigata)).